A 217-amino-acid chain; its full sequence is Deoxyribose-phosphate aldolase (217 aa).

Asp-89 (proton donor/acceptor) is an active-site residue. The active-site Schiff-base intermediate with acetaldehyde is the Lys-151. Lys-180 (proton donor/acceptor) is an active-site residue.

This sequence belongs to the DeoC/FbaB aldolase family. DeoC type 1 subfamily.

Its subcellular location is the cytoplasm. It catalyses the reaction 2-deoxy-D-ribose 5-phosphate = D-glyceraldehyde 3-phosphate + acetaldehyde. It participates in carbohydrate degradation; 2-deoxy-D-ribose 1-phosphate degradation; D-glyceraldehyde 3-phosphate and acetaldehyde from 2-deoxy-alpha-D-ribose 1-phosphate: step 2/2. Functionally, catalyzes a reversible aldol reaction between acetaldehyde and D-glyceraldehyde 3-phosphate to generate 2-deoxy-D-ribose 5-phosphate. This is Deoxyribose-phosphate aldolase from Mycoplasma mobile (strain ATCC 43663 / 163K / NCTC 11711) (Mesomycoplasma mobile).